Consider the following 155-residue polypeptide: Protein SprT-like (155 aa).

The SprT-like domain maps to 6-148 (LQRLVERVSL…VCGQCGGKLM (143 aa)). His67 lines the Zn(2+) pocket. Glu68 is a catalytic residue. His71 is a binding site for Zn(2+).

This sequence belongs to the SprT family. Zn(2+) is required as a cofactor.

The protein resides in the cytoplasm. This is Protein SprT-like from Geobacillus sp. (strain WCH70).